Consider the following 254-residue polypeptide: MKLNIRAQTAQNQHNNSPIVLVHGLFGSLDNLGVLARDLVNDHNIIQVDMRNHGLSPRDPVMNYPAMAQDLVDTLDAQQIDKATFIGHSMGGKAVMALTALASDRIDKLVAIDIAPVDYHVRRHDEIFAAINAVSESDAQTRQQAAAIMRQHLNEEGVIQFLLKSFVDGEWRFNVPVLWDQYPHIVGWEKIPAWDHPALFIPGGNSPYVSEQYRDDLLAQFPQARAHVIAGAGHWVHAEKPDAVLRAIRRYLND.

Residues serine 89 and histidine 234 contribute to the active site.

It belongs to the DmpD/TodF/XylF esterase family.

Functionally, displays esterase activity toward palmitoyl-CoA, malonyl-CoA and pNP-butyrate. The sequence is that of Esterase YbfF (ybfF) from Escherichia coli (strain K12).